Consider the following 499-residue polypeptide: U4/U6 small nuclear ribonucleoprotein Prp31 (499 aa).

The disordered stretch occupies residues 1 to 43 (MSLADELLADLEEAAEEEEGGSYGEEEEEPAIEDVQEETQLDL). Positions 7 to 40 (LLADLEEAAEEEEGGSYGEEEEEPAIEDVQEETQ) are enriched in acidic residues. 2 coiled-coil regions span residues 85–120 (EAAP…KYSK) and 181–215 (DEEL…MSFI). The region spanning 215–333 (IAPNLSIIIG…IERKFDKWQE (119 aa)) is the Nop domain. The segment at 334–357 (PPPVKQVKPLPAPLDGQRKKRGGR) is disordered. The Nuclear localization signal (NLS) motif lies at 351 to 364 (RKKRGGRRYRKMKE). Phosphoserine is present on residues Ser379, Ser395, and Ser432. Lys438 carries the N6-acetyllysine modification. Residue Ser439 is modified to Phosphoserine. Thr440 is subject to Phosphothreonine. Ser450 carries the post-translational modification Phosphoserine. The residue at position 455 (Thr455) is a Phosphothreonine. Residues Lys471 and Lys478 each participate in a glycyl lysine isopeptide (Lys-Gly) (interchain with G-Cter in SUMO2) cross-link.

It belongs to the PRP31 family. In terms of assembly, identified in the spliceosome B complex. Component of the U4/U6-U5 tri-snRNP complex composed of the U4, U6 and U5 snRNAs and at least PRPF3, PRPF4, PRPF6, PRPF8, PRPF31, SNRNP200, TXNL4A, SNRNP40, DDX23, CD2BP2, PPIH, SNU13, EFTUD2, SART1 and USP39. Interacts with a complex formed by SNU13 and U4 snRNA, but not with SNU13 or U4 snRNA alone. The complex formed by SNU13 and PRPF31 also binds U4atac snRNA, a characteristic component of specific, less abundant spliceosomal complexes. Interacts with PRPF6/U5 snRNP-associated 102 kDa protein. Component of some MLL1/MLL complex, at least composed of the core components KMT2A/MLL1, ASH2L, HCFC1/HCF1, WDR5 and RBBP5, as well as the facultative components BACC1, CHD8, E2F6, HSP70, INO80C, KANSL1, LAS1L, MAX, MCRS1, MGA, KAT8/MOF, PELP1, PHF20, PRP31, RING2, RUVB1/TIP49A, RUVB2/TIP49B, SENP3, TAF1, TAF4, TAF6, TAF7, TAF9 and TEX10. Interacts (via its NLS) with CTNNBL1. Interacts with USH1G. Post-translationally, phosphorylated by PRP4K during spliceosome assembly.

Its subcellular location is the nucleus. It is found in the nucleus speckle. It localises to the cajal body. Functionally, involved in pre-mRNA splicing as component of the spliceosome. Required for the assembly of the U4/U5/U6 tri-snRNP complex, one of the building blocks of the spliceosome. In Mus musculus (Mouse), this protein is U4/U6 small nuclear ribonucleoprotein Prp31 (Prpf31).